The sequence spans 610 residues: Zinc metalloproteinase-disintegrin-like VAP1 (610 aa).

The first 20 residues, 1 to 20, serve as a signal peptide directing secretion; the sequence is MIQVLLVTISLAVFPYQGSS. Positions 21 to 189 are excised as a propeptide; that stretch reads VILESGNVND…KKASQSNLTP (169 aa). E190 is subject to Pyrrolidone carboxylic acid (Glu). Residues 199–395 enclose the Peptidase M12B domain; it reads KYVKLFLVAD…NMPQCILKKP (197 aa). N218 carries an N-linked (GlcNAc...) asparagine glycan. Disulfide bonds link C310–C390, C350–C374, and C352–C357. H335 is a binding site for Zn(2+). Residues 335 to 346 carry the Metal-binding motif; that stretch reads HEMGHNLGMDHD. E336 acts as the Proton acceptor in catalysis. Zn(2+) contacts are provided by H339 and H345. One can recognise a Disintegrin domain in the interval 403 to 488; it reads PAVCGNYFVE…AECTDRFQRN (86 aa). Residues V405, N408, F410, E412, E415, and D418 each contribute to the Ca(2+) site. Intrachain disulfides connect C406–C435, C417–C430, C419–C425, C429–C452, C443–C449, C448–C474, C461–C481, C468–C499, C492–C504, C511–C561, C526–C572, C539–C549, C556–C598, and C592–C603. A D/ECD-tripeptide motif is present at residues 467 to 469; it reads ECD. Ca(2+) is bound by residues D469, M470, D472, D483, and R484.

It belongs to the venom metalloproteinase (M12B) family. P-III subfamily. P-IIIc sub-subfamily. Homodimer; disulfide-linked. Zn(2+) serves as cofactor. Post-translationally, the N-terminus is blocked. In terms of tissue distribution, expressed by the venom gland.

It is found in the secreted. Inhibited by EDTA and EGTA, but not by PMSF. Zinc metalloprotease that has fibrinogenolytic and hemorrhagic activities. It induces apoptosis in vascular endothelial cells (VEC), without degrading extracellular matrix (it cannot cleave collagen) or inhibiting adhesion of VEC. VAP1-induced apoptosis is inhibited by antibodies for integrin alpha-3, alpha-6, beta-1 and CD9. Apoptosis is accompanied by severe cell fragmentation, which is controlled by caspases. This chain is Zinc metalloproteinase-disintegrin-like VAP1, found in Crotalus atrox (Western diamondback rattlesnake).